Here is a 1448-residue protein sequence, read N- to C-terminus: ABC transporter G family member 9 (1448 aa).

Positions 16–28 (EGGSNLNINTPSG) are enriched in polar residues. The disordered stretch occupies residues 16–41 (EGGSNLNINTPSGMSDGDFNSGANSP). Residues 136–385 (LFKPSTWKIE…FLDLGFDCEP (250 aa)) form the ABC transporter 1 domain. The ABC transmembrane type-2 1 domain occupies 490 to 717 (WGDKFSLVSR…APYDNSVRVC (228 aa)). A run of 7 helical transmembrane segments spans residues 494–514 (FSLVSRYLSVIIQSFVYGSVF), 530–550 (AIFAAILFNAFLSEGELFATF), 579–599 (IPLTTVQVFLFSIVVYFMFGL), 604–624 (GKFFIFCFTLIGATLATTNMF), 634–654 (LYVSQNVMTGILIFMISYCGY), 663–683 (PWFGWFFWANPFTYAFKALMA), and 748–768 (LNIFITYLWWVLFIIINMVAV). The 245-residue stretch at 822-1066 (FTWENIKYTV…LTSYFERQGV (245 aa)) folds into the ABC transporter 2 domain. Residue 858–865 (GSSGAGKT) participates in ATP binding. Helical transmembrane passes span 1157 to 1177 (FYAYGSILQAVMTGIIVGFTF), 1191 to 1211 (IFFIFQALLLGILLIFVVMVQ), 1233 to 1253 (FAISIVLVEIPYTIVCGSVFF), 1272 to 1292 (FYFWIIFIIYLFFCVSFGGAI), 1299 to 1319 (MFLAMTLVPLLIVFLFLFCGV), and 1422 to 1442 (IAILIAFWMFNIFLVVSFVYL). Residues 1157–1389 (FYAYGSILQA…VPATGYVTNT (233 aa)) enclose the ABC transmembrane type-2 2 domain.

The protein belongs to the ABC transporter superfamily. ABCG family. PDR (TC 3.A.1.205) subfamily.

The protein resides in the membrane. The polypeptide is ABC transporter G family member 9 (abcG9) (Dictyostelium discoideum (Social amoeba)).